Consider the following 292-residue polypeptide: Elongation factor Ts (292 aa).

Residues 79–82 (TDFV) form an involved in Mg(2+) ion dislocation from EF-Tu region.

This sequence belongs to the EF-Ts family.

It is found in the cytoplasm. In terms of biological role, associates with the EF-Tu.GDP complex and induces the exchange of GDP to GTP. It remains bound to the aminoacyl-tRNA.EF-Tu.GTP complex up to the GTP hydrolysis stage on the ribosome. The protein is Elongation factor Ts of Xanthomonas campestris pv. campestris (strain ATCC 33913 / DSM 3586 / NCPPB 528 / LMG 568 / P 25).